A 562-amino-acid chain; its full sequence is NAD-dependent malic enzyme (562 aa).

Tyr101 serves as the catalytic Proton donor. Arg154 is an NAD(+) binding site. The Proton acceptor role is filled by Lys172. A divalent metal cation-binding residues include Glu243, Asp244, and Asp267. Asp267 and Asn415 together coordinate NAD(+).

This sequence belongs to the malic enzymes family. In terms of assembly, homotetramer. The cofactor is Mg(2+). It depends on Mn(2+) as a cofactor.

The enzyme catalyses (S)-malate + NAD(+) = pyruvate + CO2 + NADH. It catalyses the reaction oxaloacetate + H(+) = pyruvate + CO2. In Shewanella loihica (strain ATCC BAA-1088 / PV-4), this protein is NAD-dependent malic enzyme.